A 278-amino-acid chain; its full sequence is Large ribosomal subunit protein uL2 (278 aa).

The disordered stretch occupies residues 218-278 (RPHNRGVVMN…IMRSRHQRKK (61 aa)).

The protein belongs to the universal ribosomal protein uL2 family. In terms of assembly, part of the 50S ribosomal subunit. Forms a bridge to the 30S subunit in the 70S ribosome.

In terms of biological role, one of the primary rRNA binding proteins. Required for association of the 30S and 50S subunits to form the 70S ribosome, for tRNA binding and peptide bond formation. It has been suggested to have peptidyltransferase activity; this is somewhat controversial. Makes several contacts with the 16S rRNA in the 70S ribosome. In Rhizobium etli (strain ATCC 51251 / DSM 11541 / JCM 21823 / NBRC 15573 / CFN 42), this protein is Large ribosomal subunit protein uL2.